The primary structure comprises 343 residues: Biotin synthase 2 (343 aa).

The 228-residue stretch at Asn58 to Arg285 folds into the Radical SAM core domain. Cys73, Cys77, and Cys80 together coordinate [4Fe-4S] cluster. 4 residues coordinate [2Fe-2S] cluster: Cys117, Cys148, Cys208, and Arg280.

It belongs to the radical SAM superfamily. Biotin synthase family. Homodimer. Requires [4Fe-4S] cluster as cofactor. [2Fe-2S] cluster is required as a cofactor.

The enzyme catalyses (4R,5S)-dethiobiotin + (sulfur carrier)-SH + 2 reduced [2Fe-2S]-[ferredoxin] + 2 S-adenosyl-L-methionine = (sulfur carrier)-H + biotin + 2 5'-deoxyadenosine + 2 L-methionine + 2 oxidized [2Fe-2S]-[ferredoxin]. It participates in cofactor biosynthesis; biotin biosynthesis; biotin from 7,8-diaminononanoate: step 2/2. Catalyzes the conversion of dethiobiotin (DTB) to biotin by the insertion of a sulfur atom into dethiobiotin via a radical-based mechanism. The polypeptide is Biotin synthase 2 (Polaromonas sp. (strain JS666 / ATCC BAA-500)).